Reading from the N-terminus, the 363-residue chain is Holliday junction branch migration complex subunit RuvB (363 aa).

Residues 1–44 (MAIKRNQGHGLPPKRDPALGRDALTTSQALPEDQEQSANEDRIR) form a disordered region. The segment at 13–204 (PKRDPALGRD…FGLIQRLRFY (192 aa)) is large ATPase domain (RuvB-L). Positions 43, 44, 85, 88, 89, 90, 194, 204, and 241 each coordinate ATP. Position 89 (Thr-89) interacts with Mg(2+). The small ATPAse domain (RuvB-S) stretch occupies residues 205-275 (EVDELIAIVH…VAATALDLYN (71 aa)). The interval 278-363 (ALGLDWTDRL…EQSTQLDFLP (86 aa)) is head domain (RuvB-H). 2 residues coordinate DNA: Arg-333 and Arg-338.

This sequence belongs to the RuvB family. Homohexamer. Forms an RuvA(8)-RuvB(12)-Holliday junction (HJ) complex. HJ DNA is sandwiched between 2 RuvA tetramers; dsDNA enters through RuvA and exits via RuvB. An RuvB hexamer assembles on each DNA strand where it exits the tetramer. Each RuvB hexamer is contacted by two RuvA subunits (via domain III) on 2 adjacent RuvB subunits; this complex drives branch migration. In the full resolvosome a probable DNA-RuvA(4)-RuvB(12)-RuvC(2) complex forms which resolves the HJ.

It is found in the cytoplasm. It catalyses the reaction ATP + H2O = ADP + phosphate + H(+). The RuvA-RuvB-RuvC complex processes Holliday junction (HJ) DNA during genetic recombination and DNA repair, while the RuvA-RuvB complex plays an important role in the rescue of blocked DNA replication forks via replication fork reversal (RFR). RuvA specifically binds to HJ cruciform DNA, conferring on it an open structure. The RuvB hexamer acts as an ATP-dependent pump, pulling dsDNA into and through the RuvAB complex. RuvB forms 2 homohexamers on either side of HJ DNA bound by 1 or 2 RuvA tetramers; 4 subunits per hexamer contact DNA at a time. Coordinated motions by a converter formed by DNA-disengaged RuvB subunits stimulates ATP hydrolysis and nucleotide exchange. Immobilization of the converter enables RuvB to convert the ATP-contained energy into a lever motion, pulling 2 nucleotides of DNA out of the RuvA tetramer per ATP hydrolyzed, thus driving DNA branch migration. The RuvB motors rotate together with the DNA substrate, which together with the progressing nucleotide cycle form the mechanistic basis for DNA recombination by continuous HJ branch migration. Branch migration allows RuvC to scan DNA until it finds its consensus sequence, where it cleaves and resolves cruciform DNA. In Picosynechococcus sp. (strain ATCC 27264 / PCC 7002 / PR-6) (Agmenellum quadruplicatum), this protein is Holliday junction branch migration complex subunit RuvB.